The chain runs to 298 residues: ATP phosphoribosyltransferase (298 aa).

The protein belongs to the ATP phosphoribosyltransferase family. Long subfamily. Mg(2+) serves as cofactor.

The protein localises to the cytoplasm. It carries out the reaction 1-(5-phospho-beta-D-ribosyl)-ATP + diphosphate = 5-phospho-alpha-D-ribose 1-diphosphate + ATP. It participates in amino-acid biosynthesis; L-histidine biosynthesis; L-histidine from 5-phospho-alpha-D-ribose 1-diphosphate: step 1/9. With respect to regulation, feedback inhibited by histidine. Functionally, catalyzes the condensation of ATP and 5-phosphoribose 1-diphosphate to form N'-(5'-phosphoribosyl)-ATP (PR-ATP). Has a crucial role in the pathway because the rate of histidine biosynthesis seems to be controlled primarily by regulation of HisG enzymatic activity. The protein is ATP phosphoribosyltransferase of Vibrio campbellii (strain ATCC BAA-1116).